The sequence spans 218 residues: Superoxide dismutase [Mn], mitochondrial (218 aa).

Residues 1–21 (MLRFLSKNSVAAIRNVSIARG) constitute a mitochondrion transit peptide. 2 residues coordinate Mn(2+): His-50 and His-96. Ser-129 carries the phosphoserine modification. Asp-181 and His-185 together coordinate Mn(2+).

It belongs to the iron/manganese superoxide dismutase family. As to quaternary structure, homodimer. The cofactor is Mn(2+).

Its subcellular location is the mitochondrion matrix. The catalysed reaction is 2 superoxide + 2 H(+) = H2O2 + O2. Destroys superoxide anion radicals which are normally produced within the cells and which are toxic to biological systems. This Schizosaccharomyces pombe (strain 972 / ATCC 24843) (Fission yeast) protein is Superoxide dismutase [Mn], mitochondrial (sod2).